The following is a 1058-amino-acid chain: Carbamoyl phosphate synthase large chain (1058 aa).

The tract at residues 1–401 is carboxyphosphate synthetic domain; that stretch reads MPKRTDIQKI…SLLKACRSLE (401 aa). Positions 129, 169, 175, 176, 208, 210, 215, 241, 242, 243, 284, and 298 each coordinate ATP. The ATP-grasp 1 domain maps to 133-327; sequence KQLMEELEQP…IAKLAAKIAV (195 aa). 3 residues coordinate Mg(2+): glutamine 284, glutamate 298, and asparagine 300. The Mn(2+) site is built by glutamine 284, glutamate 298, and asparagine 300. Positions 402 to 546 are oligomerization domain; the sequence is IGVHHNEIPE…YSTYGWENES (145 aa). The segment at 547-929 is carbamoyl phosphate synthetic domain; the sequence is IRSDKESVLV…ALYKAFEASY (383 aa). The 191-residue stretch at 671-861 folds into the ATP-grasp 2 domain; it reads EQALKELDIP…MAQVATKLIL (191 aa). ATP-binding residues include arginine 707, serine 746, isoleucine 748, glutamate 752, glycine 777, valine 778, histidine 779, serine 780, glutamine 820, and glutamate 832. Mg(2+) contacts are provided by glutamine 820, glutamate 832, and asparagine 834. The Mn(2+) site is built by glutamine 820, glutamate 832, and asparagine 834. Positions 930-1058 constitute an MGS-like domain; sequence LHLPTFGNVV…ESRSFVTEAI (129 aa). Positions 930–1058 are allosteric domain; the sequence is LHLPTFGNVV…ESRSFVTEAI (129 aa).

The protein belongs to the CarB family. In terms of assembly, composed of two chains; the small (or glutamine) chain promotes the hydrolysis of glutamine to ammonia, which is used by the large (or ammonia) chain to synthesize carbamoyl phosphate. Tetramer of heterodimers (alpha,beta)4. It depends on Mg(2+) as a cofactor. The cofactor is Mn(2+).

The enzyme catalyses hydrogencarbonate + L-glutamine + 2 ATP + H2O = carbamoyl phosphate + L-glutamate + 2 ADP + phosphate + 2 H(+). The catalysed reaction is hydrogencarbonate + NH4(+) + 2 ATP = carbamoyl phosphate + 2 ADP + phosphate + 2 H(+). It participates in amino-acid biosynthesis; L-arginine biosynthesis; carbamoyl phosphate from bicarbonate: step 1/1. Its pathway is pyrimidine metabolism; UMP biosynthesis via de novo pathway; (S)-dihydroorotate from bicarbonate: step 1/3. In terms of biological role, large subunit of the glutamine-dependent carbamoyl phosphate synthetase (CPSase). CPSase catalyzes the formation of carbamoyl phosphate from the ammonia moiety of glutamine, carbonate, and phosphate donated by ATP, constituting the first step of 2 biosynthetic pathways, one leading to arginine and/or urea and the other to pyrimidine nucleotides. The large subunit (synthetase) binds the substrates ammonia (free or transferred from glutamine from the small subunit), hydrogencarbonate and ATP and carries out an ATP-coupled ligase reaction, activating hydrogencarbonate by forming carboxy phosphate which reacts with ammonia to form carbamoyl phosphate. In Streptococcus pneumoniae (strain 70585), this protein is Carbamoyl phosphate synthase large chain.